The primary structure comprises 614 residues: Aspartate--tRNA ligase (614 aa).

An L-aspartate-binding site is contributed by Glu-174. The aspartate stretch occupies residues 198–201 (QLFK). An L-aspartate-binding site is contributed by Arg-220. ATP is bound by residues 220–222 (RDE) and Gln-229. His-448 serves as a coordination point for L-aspartate. Glu-482 provides a ligand contact to ATP. Residue Arg-489 coordinates L-aspartate. 534–537 (GLDR) contributes to the ATP binding site. The tract at residues 587 to 614 (YEDSVKETEQRLEKEAQEDADKNSTWDE) is disordered.

The protein belongs to the class-II aminoacyl-tRNA synthetase family. Type 1 subfamily. As to quaternary structure, homodimer.

Its subcellular location is the cytoplasm. It catalyses the reaction tRNA(Asp) + L-aspartate + ATP = L-aspartyl-tRNA(Asp) + AMP + diphosphate. Functionally, catalyzes the attachment of L-aspartate to tRNA(Asp) in a two-step reaction: L-aspartate is first activated by ATP to form Asp-AMP and then transferred to the acceptor end of tRNA(Asp). The polypeptide is Aspartate--tRNA ligase (Lactobacillus johnsonii (strain CNCM I-12250 / La1 / NCC 533)).